Here is a 1085-residue protein sequence, read N- to C-terminus: MSYAELQVTTHFSFLRGASSAQELFETAKALGIQAIGVVDRNSLAGIVRALEASRATDIRLVVGCRLDLTDGMSLLVYPTDRAAYSRLTRLITLGKSRGGKNNCILHWDDVIAYSRGMIGVLVPDLPDATCAAQLRRIAEAFGDRAYVSLCLRRRQNDQMRLHEISNLAARFKVKTVVTNDVLFHEPGRRQLQDIVTCIRHNTTIDDVGFERERHADRYLKPPEEMERLFSRYSEALARTLEIVRRCKFSLEELTYQYPEEAIVPGKDAQASLEHYVWECAPDRYPEGLPQDVLKTVRHELDLIRTMKYAPYFLTVFSIVRFARSQGILCQGRGSAANSAVCYILGITSIDPSTNDLLFERFVSQERDEPPDIDVDFEHERREEVIQWIYKTYTKDKAALCATVTRYRAKGAIRDVGKALGLPEDVIKALSSGMWSWSEEVPDRNIRELNLNPDDRRLALTLKLAQQLMGAPRHLGQHPGGFVLTHDRLDDLVPIEPATMKDRQIIEWDKDDVEALKFMKVDVLALGMLTCMAKAFDLIREHKGQQLDLSNIEQEDAATYAMIRKADTLGTFQIESRAQMAMLPRLKPRTFYDLVVQVAIVRPGPIQGDMVHPYLRRREGKEPVEYPTPELEAVLGKTLGVPLFQESAMRVAMVCAGFTGGEADQLRKSMATFKFTGGVSRFKDKLVSGMVKNGYSPEFAEKTFSQLEGFGSYGFPESHAASFALIAYASNYIKCHYPDVFCAALLNSQPMGFYAPAQIVGDAIKHGVEVRPVCVNRSRWDCTLERIEGSDRHAVRLGFRQVKGLAVADAARIVAARMNNPFASVDDMWRRSSVPTEALVQLAEADAFLPSLKLERRDALWAIKALRDEPLPLFAAAAEREATAIAEQQEPEVALRQMTDGHNVIEDYSHTGLTLRQHPVAFLRRDLSARNIIPCAEAMNARDGRWVYTAGLVLVRQKPGSAKGVMFITIEDETGPANIVVWPSLFEKRRSVVLGSSMMAINGRIQREGEVVHLVAQQLFDLSADLVGLADRDTGFRLPAGRGDEFAHGGGGPDSRDRQKPVVPRDMFTPDLHIDTLKIKSRNFQ.

The tract at residues 1040 to 1066 (AGRGDEFAHGGGGPDSRDRQKPVVPRD) is disordered.

This sequence belongs to the DNA polymerase type-C family. DnaE2 subfamily.

The protein resides in the cytoplasm. It catalyses the reaction DNA(n) + a 2'-deoxyribonucleoside 5'-triphosphate = DNA(n+1) + diphosphate. In terms of biological role, DNA polymerase involved in damage-induced mutagenesis and translesion synthesis (TLS). It is not the major replicative DNA polymerase. This is Error-prone DNA polymerase 2 from Agrobacterium fabrum (strain C58 / ATCC 33970) (Agrobacterium tumefaciens (strain C58)).